The chain runs to 449 residues: Sensor protein QseC (449 aa).

At 1-12 (MKLTQRLSLRVR) the chain is on the cytoplasmic side. A helical transmembrane segment spans residues 13 to 33 (LTLIFLILVSITWAISSFVAW). Residues 34-161 (RKTTDNVDEL…REDMALAIVA (128 aa)) lie on the Periplasmic side of the membrane. Residues 162 to 182 (AQLTPWLIALPFMLLILLLLL) traverse the membrane as a helical segment. Residues 183–235 (HRELRPLKKLAQALRFRSPESETPLDAKGVPSEVRPLVEALNQLFSRIHSMMV) enclose the HAMP domain. Residues 183–449 (HRELRPLKKL…EGGFEAVVRW (267 aa)) are Cytoplasmic-facing. In terms of domain architecture, Histidine kinase spans 243 to 449 (DAAHELRSPL…EGGFEAVVRW (207 aa)). H246 is subject to Phosphohistidine; by autocatalysis.

It localises to the cell inner membrane. The enzyme catalyses ATP + protein L-histidine = ADP + protein N-phospho-L-histidine.. Its function is as follows. Member of a two-component regulatory system QseB/QseC. Activates the flagella regulon by activating transcription of FlhDC. May activate QseB by phosphorylation. In Salmonella typhi, this protein is Sensor protein QseC (qseC).